The following is a 743-amino-acid chain: DNA ligase 2 (743 aa).

Residues 45–49 (DADFD), 94–95 (SL), and Glu-125 each bind NAD(+). Lys-127 (N6-AMP-lysine intermediate) is an active-site residue. The NAD(+) site is built by Arg-148, Glu-185, Lys-301, and Lys-325. 4 residues coordinate Zn(2+): Cys-419, Cys-422, Cys-438, and Cys-444. One can recognise a BRCT domain in the interval 639–728 (EGPRPLEGLT…PERAKEAALP (90 aa)). The tract at residues 720-743 (ERAKEAALPVPEAAPAADPENSGE) is disordered. The segment covering 725–743 (AALPVPEAAPAADPENSGE) has biased composition (low complexity).

The protein belongs to the NAD-dependent DNA ligase family. LigA subfamily. It depends on Mg(2+) as a cofactor. Mn(2+) serves as cofactor.

It carries out the reaction NAD(+) + (deoxyribonucleotide)n-3'-hydroxyl + 5'-phospho-(deoxyribonucleotide)m = (deoxyribonucleotide)n+m + AMP + beta-nicotinamide D-nucleotide.. In terms of biological role, DNA ligase that catalyzes the formation of phosphodiester linkages between 5'-phosphoryl and 3'-hydroxyl groups in double-stranded DNA using NAD as a coenzyme and as the energy source for the reaction. It is essential for DNA replication and repair of damaged DNA. The polypeptide is DNA ligase 2 (Streptomyces griseus subsp. griseus (strain JCM 4626 / CBS 651.72 / NBRC 13350 / KCC S-0626 / ISP 5235)).